Here is a 428-residue protein sequence, read N- to C-terminus: Somatostatin receptor type 3 (428 aa).

Residues 1-12 (MATVTYPSSEPT) are compositionally biased toward polar residues. Residues 1 to 20 (MATVTYPSSEPTTLDPGNAS) are disordered. At 1–45 (MATVTYPSSEPTTLDPGNASSTWPLDTTLGNTSAGASLTGLAVSG) the chain is on the extracellular side. Residues Asn18 and Asn31 are each glycosylated (N-linked (GlcNAc...) asparagine). The chain crosses the membrane as a helical span at residues 46-71 (ILISLVYLVVCVVGLLGNSLVIYVVL). Residues 72–81 (RHTSSPSVTS) lie on the Cytoplasmic side of the membrane. A helical membrane pass occupies residues 82–103 (VYILNLALADELFMLGLPFLAA). Residues 104 to 118 (QNALSYWPFGSLMCR) lie on the Extracellular side of the membrane. Cys117 and Cys192 are disulfide-bonded. The chain crosses the membrane as a helical span at residues 119-140 (LVMAVDGINQFTSIFCLTVMSV). Over 141–162 (DRYLAVVHPTRSARWRTAPVAR) the chain is Cytoplasmic. Residues 163–182 (TVSAAVWVASAVVVLPVVVF) traverse the membrane as a helical segment. At 183–206 (SGVPRGMSTCHMQWPEPAAAWRTA) the chain is on the extracellular side. The helical transmembrane segment at 207-232 (FIIYTAALGFFGPLLVICLCYLLIVV) threads the bilayer. Over 233-266 (KVRSTTRRVRAPSCQWVQAPACQRRRRSERRVTR) the chain is Cytoplasmic. A helical membrane pass occupies residues 267–288 (MVVAVVALFVLCWMPFYLLNIV). Topologically, residues 289-302 (NVVCPLPEEPAFFG) are extracellular. Residues 303-325 (LYFLVVALPYANSCANPILYGFL) form a helical membrane-spanning segment. Residues 326–428 (SYRFKQGFRR…GDKASTLSHL (103 aa)) are Cytoplasmic-facing. Residues Ser341, Ser346, and Ser351 each carry the phosphoserine modification. The segment at 344–428 (IRSQEPGSGP…GDKASTLSHL (85 aa)) is disordered. The residue at position 357 (Thr357) is a Phosphothreonine. Positions 357–370 (TEEEEDEEEEERRE) are enriched in acidic residues. A compositionally biased stretch (polar residues) spans 385 to 412 (RLSQIAQAGTSGQQPRPCTGTAKEQQLL).

The protein belongs to the G-protein coupled receptor 1 family. As to quaternary structure, homodimer and heterodimer with SSTR2. Heterodimerization with SSTR2 inactivates SSTR3 receptor function. In terms of processing, phosphorylated. Phosphorylation increases upon somatostatin binding. As to expression, in the brain, primarily observed in the forebrain. Moderate levels found throughout laminae 2-6 of the neocortex and allocortex, and high levels in lamina 2 of the piriform and entorhinal cortices. High levels also present in the cornu ammonis fields of the hippocampus. In the amygdala, highly expressed in the nucleus of the lateral olfactory tract with expression also detected in the rostral portions of the basal magnocellular and lateral nuclei. In the diencephalon, moderate levels observed in the ventromedial and arcuate nuclei of the hypothalamus. In the midbrain, moderate levels found in the lateral portion of the substantia nigra pars reticulata.

It is found in the cell membrane. In terms of biological role, receptor for somatostatin-14 and -28. This receptor is coupled via pertussis toxin sensitive G proteins to inhibition of adenylyl cyclase. This chain is Somatostatin receptor type 3 (Sstr3), found in Mus musculus (Mouse).